Reading from the N-terminus, the 315-residue chain is Probable diguanylate cyclase DgcF (315 aa).

4 consecutive transmembrane segments (helical) span residues 10–30, 41–61, 80–100, and 116–136; these read FSTG…GVLP, IALI…SLAF, LLTF…VIDI, and LGIA…AAIN. Residues 173–310 enclose the GGDEF domain; it reads QHLTVMLLDI…GRNRTSTMRY (138 aa). The Mg(2+) site is built by D181 and I182. Residues N189, H194, and D198 each contribute to the substrate site. E224 provides a ligand contact to Mg(2+).

In terms of assembly, homodimer. It depends on Mg(2+) as a cofactor.

The protein resides in the cell membrane. It carries out the reaction 2 GTP = 3',3'-c-di-GMP + 2 diphosphate. The protein operates within purine metabolism; 3',5'-cyclic di-GMP biosynthesis. Catalyzes the synthesis of cyclic-di-GMP (c-di-GMP) via the condensation of 2 GTP molecules. The chain is Probable diguanylate cyclase DgcF from Escherichia coli (strain K12).